Here is a 96-residue protein sequence, read N- to C-terminus: Putative regulatory protein DET0036 (96 aa).

The protein belongs to the RemA family.

This Dehalococcoides mccartyi (strain ATCC BAA-2266 / KCTC 15142 / 195) (Dehalococcoides ethenogenes (strain 195)) protein is Putative regulatory protein DET0036.